A 507-amino-acid chain; its full sequence is ATP synthase subunit alpha, mitochondrial (507 aa).

Residue 171–178 (GDRQTGKT) participates in ATP binding.

This sequence belongs to the ATPase alpha/beta chains family. F-type ATPases have 2 components, CF(1) - the catalytic core - and CF(0) - the membrane proton channel. CF(1) has five subunits: alpha(3), beta(3), gamma(1), delta(1), epsilon(1). CF(0) has three main subunits: a, b and c.

The protein localises to the mitochondrion. It localises to the mitochondrion inner membrane. In terms of biological role, mitochondrial membrane ATP synthase (F(1)F(0) ATP synthase or Complex V) produces ATP from ADP in the presence of a proton gradient across the membrane which is generated by electron transport complexes of the respiratory chain. F-type ATPases consist of two structural domains, F(1) - containing the extramembraneous catalytic core, and F(0) - containing the membrane proton channel, linked together by a central stalk and a peripheral stalk. During catalysis, ATP synthesis in the catalytic domain of F(1) is coupled via a rotary mechanism of the central stalk subunits to proton translocation. Subunits alpha and beta form the catalytic core in F(1). Rotation of the central stalk against the surrounding alpha(3)beta(3) subunits leads to hydrolysis of ATP in three separate catalytic sites on the beta subunits. Subunit alpha does not bear the catalytic high-affinity ATP-binding sites. This chain is ATP synthase subunit alpha, mitochondrial (ATPA), found in Raphanus sativus (Radish).